Consider the following 385-residue polypeptide: UDP-N-acetylglucosamine--N-acetylmuramyl-(pentapeptide) pyrophosphoryl-undecaprenol N-acetylglucosamine transferase (385 aa).

Residues 11–13 (TGG), N117, R160, S215, and Q317 contribute to the UDP-N-acetyl-alpha-D-glucosamine site.

It belongs to the glycosyltransferase 28 family. MurG subfamily.

It localises to the cell inner membrane. The catalysed reaction is di-trans,octa-cis-undecaprenyl diphospho-N-acetyl-alpha-D-muramoyl-L-alanyl-D-glutamyl-meso-2,6-diaminopimeloyl-D-alanyl-D-alanine + UDP-N-acetyl-alpha-D-glucosamine = di-trans,octa-cis-undecaprenyl diphospho-[N-acetyl-alpha-D-glucosaminyl-(1-&gt;4)]-N-acetyl-alpha-D-muramoyl-L-alanyl-D-glutamyl-meso-2,6-diaminopimeloyl-D-alanyl-D-alanine + UDP + H(+). Its pathway is cell wall biogenesis; peptidoglycan biosynthesis. Functionally, cell wall formation. Catalyzes the transfer of a GlcNAc subunit on undecaprenyl-pyrophosphoryl-MurNAc-pentapeptide (lipid intermediate I) to form undecaprenyl-pyrophosphoryl-MurNAc-(pentapeptide)GlcNAc (lipid intermediate II). This chain is UDP-N-acetylglucosamine--N-acetylmuramyl-(pentapeptide) pyrophosphoryl-undecaprenol N-acetylglucosamine transferase, found in Rickettsia prowazekii (strain Madrid E).